The sequence spans 34 residues: Tryptophanase operon leader peptide (34 aa).

The sequence is that of Tryptophanase operon leader peptide (tnaL) from Proteus vulgaris.